Reading from the N-terminus, the 259-residue chain is DNA-directed RNA polymerase subunit Rpo3 (259 aa).

The protein belongs to the archaeal Rpo3/eukaryotic RPB3 RNA polymerase subunit family. As to quaternary structure, part of the RNA polymerase complex.

The protein resides in the cytoplasm. It carries out the reaction RNA(n) + a ribonucleoside 5'-triphosphate = RNA(n+1) + diphosphate. Its function is as follows. DNA-dependent RNA polymerase (RNAP) catalyzes the transcription of DNA into RNA using the four ribonucleoside triphosphates as substrates. This chain is DNA-directed RNA polymerase subunit Rpo3, found in Pyrobaculum arsenaticum (strain DSM 13514 / JCM 11321 / PZ6).